A 250-amino-acid polypeptide reads, in one-letter code: Phosphoribosylaminoimidazole-succinocarboxamide synthase (250 aa).

The protein belongs to the SAICAR synthetase family.

The enzyme catalyses 5-amino-1-(5-phospho-D-ribosyl)imidazole-4-carboxylate + L-aspartate + ATP = (2S)-2-[5-amino-1-(5-phospho-beta-D-ribosyl)imidazole-4-carboxamido]succinate + ADP + phosphate + 2 H(+). It participates in purine metabolism; IMP biosynthesis via de novo pathway; 5-amino-1-(5-phospho-D-ribosyl)imidazole-4-carboxamide from 5-amino-1-(5-phospho-D-ribosyl)imidazole-4-carboxylate: step 1/2. The polypeptide is Phosphoribosylaminoimidazole-succinocarboxamide synthase (Bifidobacterium longum (strain DJO10A)).